We begin with the raw amino-acid sequence, 420 residues long: D-tagatose-1,6-bisphosphate aldolase subunit GatZ (420 aa).

The protein belongs to the GatZ/KbaZ family. GatZ subfamily. As to quaternary structure, forms a complex with GatY.

The protein operates within carbohydrate metabolism; D-tagatose 6-phosphate degradation; D-glyceraldehyde 3-phosphate and glycerone phosphate from D-tagatose 6-phosphate: step 2/2. Functionally, component of the tagatose-1,6-bisphosphate aldolase GatYZ that is required for full activity and stability of the Y subunit. Could have a chaperone-like function for the proper and stable folding of GatY. When expressed alone, GatZ does not show any aldolase activity. Is involved in the catabolism of galactitol. The polypeptide is D-tagatose-1,6-bisphosphate aldolase subunit GatZ (Escherichia coli O8 (strain IAI1)).